A 308-amino-acid polypeptide reads, in one-letter code: Aspartate carbamoyltransferase catalytic subunit (308 aa).

Residues Arg59 and Thr60 each coordinate carbamoyl phosphate. Position 87 (Lys87) interacts with L-aspartate. Residues Arg109, His137, and Gln140 each coordinate carbamoyl phosphate. Residues Arg170 and Arg224 each contribute to the L-aspartate site. Residues Gly265 and Pro266 each contribute to the carbamoyl phosphate site.

This sequence belongs to the aspartate/ornithine carbamoyltransferase superfamily. ATCase family. As to quaternary structure, heterododecamer (2C3:3R2) of six catalytic PyrB chains organized as two trimers (C3), and six regulatory PyrI chains organized as three dimers (R2).

The enzyme catalyses carbamoyl phosphate + L-aspartate = N-carbamoyl-L-aspartate + phosphate + H(+). It participates in pyrimidine metabolism; UMP biosynthesis via de novo pathway; (S)-dihydroorotate from bicarbonate: step 2/3. In terms of biological role, catalyzes the condensation of carbamoyl phosphate and aspartate to form carbamoyl aspartate and inorganic phosphate, the committed step in the de novo pyrimidine nucleotide biosynthesis pathway. This chain is Aspartate carbamoyltransferase catalytic subunit, found in Flavobacterium psychrophilum (strain ATCC 49511 / DSM 21280 / CIP 103535 / JIP02/86).